The primary structure comprises 541 residues: Protein ST7 homolog (541 aa).

A helical membrane pass occupies residues 15–35 (FYVALTGTSSLISGLILIFEW). The segment at 62 to 116 (DAQSDSSNGSGSSTSSGSSSSSNGGGGGGGGGAGGGGPGAGGGTNSTTTTGTQMP) is disordered. Over residues 67 to 83 (SSNGSGSSTSSGSSSSS) the composition is skewed to low complexity. The segment covering 84-105 (NGGGGGGGGGAGGGGPGAGGGT) has biased composition (gly residues). The chain crosses the membrane as a helical span at residues 476-496 (LPFFILFTAGLCSFTALLALL).

It belongs to the ST7 family.

It localises to the membrane. The polypeptide is Protein ST7 homolog (Drosophila pseudoobscura pseudoobscura (Fruit fly)).